The primary structure comprises 115 residues: Ribonuclease P protein component (115 aa).

Belongs to the RnpA family. As to quaternary structure, consists of a catalytic RNA component (M1 or rnpB) and a protein subunit.

The catalysed reaction is Endonucleolytic cleavage of RNA, removing 5'-extranucleotides from tRNA precursor.. In terms of biological role, RNaseP catalyzes the removal of the 5'-leader sequence from pre-tRNA to produce the mature 5'-terminus. It can also cleave other RNA substrates such as 4.5S RNA. The protein component plays an auxiliary but essential role in vivo by binding to the 5'-leader sequence and broadening the substrate specificity of the ribozyme. This chain is Ribonuclease P protein component, found in Bacillus mycoides (strain KBAB4) (Bacillus weihenstephanensis).